A 512-amino-acid chain; its full sequence is Cytochrome P450 26B1 (512 aa).

A heme-binding site is contributed by C441.

This sequence belongs to the cytochrome P450 family. It depends on heme as a cofactor. Highly expressed in brain, particularly in the cerebellum and pons.

The protein resides in the endoplasmic reticulum membrane. Its subcellular location is the microsome membrane. It catalyses the reaction all-trans-retinoate + reduced [NADPH--hemoprotein reductase] + O2 = all-trans-4-hydroxyretinoate + oxidized [NADPH--hemoprotein reductase] + H2O + H(+). The enzyme catalyses all-trans-retinoate + reduced [NADPH--hemoprotein reductase] + O2 = all-trans-18-hydroxyretinoate + oxidized [NADPH--hemoprotein reductase] + H2O + H(+). Functionally, a cytochrome P450 monooxygenase involved in the metabolism of retinoates (RAs), the active metabolites of vitamin A, and critical signaling molecules in animals. RAs exist as at least four different isomers: all-trans-RA (atRA), 9-cis-RA, 13-cis-RA, and 9,13-dicis-RA, where atRA is considered to be the biologically active isomer, although 9-cis-RA and 13-cis-RA also have activity. Catalyzes the hydroxylation of atRA primarily at C-4 and C-18, thereby contributing to the regulation of atRA homeostasis and signaling. Hydroxylation of atRA limits its biological activity and initiates a degradative process leading to its eventual elimination. Involved in the convertion of atRA to all-trans-4-oxo-RA. Can oxidize all-trans-13,14-dihydroretinoate (DRA) to metabolites which could include all-trans-4-oxo-DRA, all-trans-4-hydroxy-DRA, all-trans-5,8-epoxy-DRA, and all-trans-18-hydroxy-DRA. Shows preference for the following substrates: atRA &gt; 9-cis-RA &gt; 13-cis-RA. Plays a central role in germ cell development: acts by degrading RAs in the developing testis, preventing STRA8 expression, thereby leading to delay of meiosis. Required for the maintenance of the undifferentiated state of male germ cells during embryonic development in Sertoli cells, inducing arrest in G0 phase of the cell cycle and preventing meiotic entry. Plays a role in skeletal development, both at the level of patterning and in the ossification of bone and the establishment of some synovial joints. Essential for postnatal survival. In terms of biological role, also has a significant activity in oxidation of tazarotenic acid and may therefore metabolize that xenobiotic in vivo. The polypeptide is Cytochrome P450 26B1 (CYP26B1) (Homo sapiens (Human)).